A 205-amino-acid chain; its full sequence is Outer-membrane lipoprotein LolB (205 aa).

Residues methionine 1–glycine 17 form the signal peptide. The N-palmitoyl cysteine moiety is linked to residue cysteine 18. Cysteine 18 carries S-diacylglycerol cysteine lipidation.

Belongs to the LolB family. Monomer.

The protein localises to the cell outer membrane. Its function is as follows. Plays a critical role in the incorporation of lipoproteins in the outer membrane after they are released by the LolA protein. This Pseudomonas fluorescens (strain Pf0-1) protein is Outer-membrane lipoprotein LolB.